The primary structure comprises 905 residues: Alanine--tRNA ligase (905 aa).

Residues H582, H586, C687, and H691 each contribute to the Zn(2+) site.

Belongs to the class-II aminoacyl-tRNA synthetase family. Zn(2+) serves as cofactor.

It is found in the cytoplasm. It carries out the reaction tRNA(Ala) + L-alanine + ATP = L-alanyl-tRNA(Ala) + AMP + diphosphate. Functionally, catalyzes the attachment of alanine to tRNA(Ala) in a two-step reaction: alanine is first activated by ATP to form Ala-AMP and then transferred to the acceptor end of tRNA(Ala). Also edits incorrectly charged Ser-tRNA(Ala) and Gly-tRNA(Ala) via its editing domain. The protein is Alanine--tRNA ligase of Mycoplasma mobile (strain ATCC 43663 / 163K / NCTC 11711) (Mesomycoplasma mobile).